The following is a 662-amino-acid chain: Translation factor GUF1, mitochondrial (662 aa).

Residues M1–Y28 constitute a mitochondrion transit peptide. Positions E62–D244 constitute a tr-type G domain. Residues A71–S78, D137–H141, and N191–D194 each bind GTP.

This sequence belongs to the TRAFAC class translation factor GTPase superfamily. Classic translation factor GTPase family. LepA subfamily.

The protein localises to the mitochondrion inner membrane. The enzyme catalyses GTP + H2O = GDP + phosphate + H(+). In terms of biological role, promotes mitochondrial protein synthesis. May act as a fidelity factor of the translation reaction, by catalyzing a one-codon backward translocation of tRNAs on improperly translocated ribosomes. Binds to mitochondrial ribosomes in a GTP-dependent manner. The chain is Translation factor GUF1, mitochondrial from Meyerozyma guilliermondii (strain ATCC 6260 / CBS 566 / DSM 6381 / JCM 1539 / NBRC 10279 / NRRL Y-324) (Yeast).